Reading from the N-terminus, the 425-residue chain is Septin-7 (425 aa).

The Septin-type G domain occupies 28 to 297 (RGFEFTLMVV…ENYRSRKLAA (270 aa)). The tract at residues 38–45 (GESGLGKS) is G1 motif. Residues 38–45 (GESGLGKS), T71, G97, 176–184 (KADTLTPEE), G231, and R246 contribute to the GTP site. The tract at residues 94-97 (DTPG) is G3 motif. Residues 175-178 (AKAD) form a G4 motif region. The stretch at 324–421 (LAQMEEERRE…SRTLEKNKKK (98 aa)) forms a coiled coil.

This sequence belongs to the TRAFAC class TrmE-Era-EngA-EngB-Septin-like GTPase superfamily. Septin GTPase family. Monomer, and homodimer. Nucleotide binding promotes oligomerization. Can form heterooligomers with other family members and form filaments.

Its subcellular location is the cytoplasm. The protein resides in the chromosome. The protein localises to the centromere. It is found in the kinetochore. It localises to the cytoskeleton. Its subcellular location is the spindle. The protein resides in the cleavage furrow. The protein localises to the midbody. It is found in the cilium axoneme. In terms of biological role, filament-forming cytoskeletal GTPase. Required for normal organization of the actin cytoskeleton. Required for normal progress through mitosis. Involved in cytokinesis. Plays a role in ciliogenesis and collective cell movements including convergent extension during gastrulation. Controls cell elongation but not polarization during convergent extension. This chain is Septin-7, found in Xenopus laevis (African clawed frog).